Reading from the N-terminus, the 401-residue chain is Acetate kinase (401 aa).

A Mg(2+)-binding site is contributed by N9. K16 lines the ATP pocket. R88 is a binding site for substrate. Residue D147 is the Proton donor/acceptor of the active site. ATP is bound by residues 207-211, 282-284, and 333-337; these read HLGNG, DCR, and GIGEN. E388 provides a ligand contact to Mg(2+).

It belongs to the acetokinase family. In terms of assembly, homodimer. The cofactor is Mg(2+). Mn(2+) serves as cofactor.

It is found in the cytoplasm. The catalysed reaction is acetate + ATP = acetyl phosphate + ADP. It functions in the pathway metabolic intermediate biosynthesis; acetyl-CoA biosynthesis; acetyl-CoA from acetate: step 1/2. Catalyzes the formation of acetyl phosphate from acetate and ATP. Can also catalyze the reverse reaction. This is Acetate kinase from Haemophilus influenzae (strain 86-028NP).